Reading from the N-terminus, the 569-residue chain is Cationic amino acid transporter 9, chloroplastic (569 aa).

Residues 1–41 constitute a chloroplast transit peptide; sequence MGGHEGFSNQRLSSATWFSHFRASALRSKSLPPPSSQTAVR. Helical transmembrane passes span 53 to 73, 81 to 101, 113 to 135, 155 to 175, 181 to 201, 215 to 235, 250 to 270, 284 to 304, 333 to 353, 406 to 428, 444 to 464, 467 to 487, 502 to 522, and 528 to 548; these read GLFDLILLGVGASIGAGVFVV, AGPGVTISFLLAGASCVLNAL, VVGGAYMYSYSAFNEITAFLVFV, YAVALLELFPALKGSIPLWMG, LGGLLSLNILAPILLALLTLV, VMTATKVVIVLVVICAGAFEI, AVLTGATVVFFSYVGFDAVAN, IGIMGSLLVCISLYIGVCLVL, ILISIGAVAGLTTTLLVGLYV, HILSVGTLTGYSVVAACVVALRL, WQEGVICLVIIACSGFGAGVF, FSASVIFILLSVGVAVVASAV, FSCPGVPIVPSVCIFFNIFLF, and EAWIRFVVVSVLATAVYALYG.

The protein belongs to the amino acid-polyamine-organocation (APC) superfamily. Cationic amino acid transporter (CAT) (TC 2.A.3.3) family. As to expression, expressed in roots, stems, flowers, and leaves.

Its subcellular location is the plastid. The protein resides in the chloroplast membrane. In terms of biological role, permease involved in the transport of the cationic amino acids. The protein is Cationic amino acid transporter 9, chloroplastic (CAT9) of Arabidopsis thaliana (Mouse-ear cress).